Here is a 193-residue protein sequence, read N- to C-terminus: Xanthine phosphoribosyltransferase (193 aa).

Xanthine-binding residues include leucine 20 and threonine 27. Residue 128–132 (ANGQA) coordinates 5-phospho-alpha-D-ribose 1-diphosphate. Residue lysine 156 coordinates xanthine.

The protein belongs to the purine/pyrimidine phosphoribosyltransferase family. Xpt subfamily. As to quaternary structure, homodimer.

It localises to the cytoplasm. The enzyme catalyses XMP + diphosphate = xanthine + 5-phospho-alpha-D-ribose 1-diphosphate. It functions in the pathway purine metabolism; XMP biosynthesis via salvage pathway; XMP from xanthine: step 1/1. In terms of biological role, converts the preformed base xanthine, a product of nucleic acid breakdown, to xanthosine 5'-monophosphate (XMP), so it can be reused for RNA or DNA synthesis. In Streptococcus pneumoniae serotype 2 (strain D39 / NCTC 7466), this protein is Xanthine phosphoribosyltransferase.